The primary structure comprises 666 residues: Translation factor guf1, mitochondrial (666 aa).

The N-terminal 44 residues, 1 to 44 (MRGCLQLGRWLSAAPRCQAASLRPPTVFPSYRYNRSFSTTTIYY), are a transit peptide targeting the mitochondrion. The 181-residue stretch at 68–248 (ERFRNFCIVA…TVVEKVPAPI (181 aa)) folds into the tr-type G domain. GTP-binding positions include 77–84 (AHVDHGKS), 141–145 (DTPGH), and 195–198 (NKVD).

The protein belongs to the TRAFAC class translation factor GTPase superfamily. Classic translation factor GTPase family. LepA subfamily.

The protein localises to the mitochondrion inner membrane. The enzyme catalyses GTP + H2O = GDP + phosphate + H(+). Promotes mitochondrial protein synthesis. May act as a fidelity factor of the translation reaction, by catalyzing a one-codon backward translocation of tRNAs on improperly translocated ribosomes. Binds to mitochondrial ribosomes in a GTP-dependent manner. This Penicillium rubens (strain ATCC 28089 / DSM 1075 / NRRL 1951 / Wisconsin 54-1255) (Penicillium chrysogenum) protein is Translation factor guf1, mitochondrial (guf1).